Reading from the N-terminus, the 528-residue chain is Protein spinster homolog 1 (528 aa).

Positions 1–38 (MAGSDTAPFLSQADDPDDGPAPGHPGLPGPMGNPKSGE) are disordered. Ala-2 bears the N-acetylalanine mark. Helical transmembrane passes span 60–80 (LIVV…FTVA), 98–118 (GLIQ…FGYL), 126–146 (YLMC…SFIP), 160–180 (VGVG…DLFV), 187–207 (MLSI…IAGS), 218–238 (WALR…FLVV), 278–298 (LGFT…PAFL), 323–343 (LIFG…GVEI), 357–377 (LVCA…LACA), 381–401 (IVAT…NWAI), 421–441 (FQIV…IGLI), and 465–485 (MLCA…AMFI). Ser-518 is subject to Phosphoserine.

This sequence belongs to the major facilitator superfamily. Spinster (TC 2.A.1.49) family. In terms of assembly, interacts with BCL2 and BCL2L1. In terms of tissue distribution, expressed in liver (at mRNA and protein levels).

The protein localises to the lysosome membrane. It carries out the reaction a 1-acyl-sn-glycero-3-phosphocholine(out) + H(+)(out) = a 1-acyl-sn-glycero-3-phosphocholine(in) + H(+)(in). The catalysed reaction is 1-hexadecanoyl-sn-glycero-3-phosphocholine(out) + H(+)(out) = 1-hexadecanoyl-sn-glycero-3-phosphocholine(in) + H(+)(in). It catalyses the reaction 1-(9Z-octadecenoyl)-sn-glycero-3-phosphocholine(out) + H(+)(out) = 1-(9Z-octadecenoyl)-sn-glycero-3-phosphocholine(in) + H(+)(in). The enzyme catalyses 1-(5Z,8Z,11Z,14Z-eicosatetraenoyl)-sn-glycero-3-phosphocholine(out) + H(+)(out) = 1-(5Z,8Z,11Z,14Z-eicosatetraenoyl)-sn-glycero-3-phosphocholine(in) + H(+)(in). It carries out the reaction 1-(4Z,7Z,10Z,13Z,16Z,19Z-docosahexaenoyl)-sn-glycero-3-phosphocholine(out) + H(+)(out) = 1-(4Z,7Z,10Z,13Z,16Z,19Z-docosahexaenoyl)-sn-glycero-3-phosphocholine(in) + H(+)(in). The catalysed reaction is a 1-acyl-sn-glycero-3-phosphoethanolamine(out) + H(+)(out) = a 1-acyl-sn-glycero-3-phosphoethanolamine(in) + H(+)(in). It catalyses the reaction 1-(9Z-octadecenoyl)-sn-glycero-3-phosphoethanolamine(out) + H(+)(out) = 1-(9Z-octadecenoyl)-sn-glycero-3-phosphoethanolamine(in) + H(+)(in). The enzyme catalyses 1-acyl-sn-glycero-3-phospho-(1'-sn-glycerol)(out) + H(+)(out) = 1-acyl-sn-glycero-3-phospho-(1'-sn-glycerol)(in) + H(+)(in). It carries out the reaction 1-(9Z-octadecenoyl)-sn-glycero-3-phospho-(1'-sn-glycerol)(out) + H(+)(out) = 1-(9Z-octadecenoyl)-sn-glycero-3-phospho-(1'-sn-glycerol)(in) + H(+)(in). The catalysed reaction is a 1-O-(1Z-alkenyl)-sn-glycero-3-phosphocholine(out) + H(+)(out) = a 1-O-(1Z-alkenyl)-sn-glycero-3-phosphocholine(in) + H(+)(in). It catalyses the reaction 1-(1Z-hexadecenyl)-sn-glycero-3-phosphocholine(out) + H(+)(out) = 1-(1Z-hexadecenyl)-sn-glycero-3-phosphocholine(in) + H(+)(in). The enzyme catalyses a 1-O-(1Z-alkenyl)-sn-glycero-3-phosphoethanolamine(out) + H(+)(out) = a 1-O-(1Z-alkenyl)-sn-glycero-3-phosphoethanolamine(in) + H(+)(in). It carries out the reaction 1-O-(1Z-hexadecenyl)-sn-glycero-3-phosphoethanolamine(out) + H(+)(out) = 1-O-(1Z-hexadecenyl)-sn-glycero-3-phosphoethanolamine(in) + H(+)(in). Functionally, plays a critical role in the phospholipid salvage pathway from lysosomes to the cytosol. Mediates the rate-limiting, proton-dependent, lysosomal efflux of lysophospholipids, which can then be reacylated by acyltransferases in the endoplasmic reticulum to form phospholipids. Selective for zwitterionic headgroups such as lysophosphatidylcholine (LPC) and lysophosphatidylethanolamine (LPE), can also transport lysophosphatidylglycerol (LPG), but not other anionic lysophospholipids, sphingosine, nor sphingomyelin. Transports lysophospholipids with saturated, monounsaturated, and polyunsaturated fatty acids, such as 1-hexadecanoyl-sn-glycero-3-phosphocholine, 1-(9Z-octadecenoyl)-sn-glycero-3-phosphocholine and 1-(4Z,7Z,10Z,13Z,16Z,19Z-docosahexaenoyl)-sn-glycero-3-phosphocholine, respectively. Can also transport lysoplasmalogen (LPC with a fatty alcohol) such as 1-(1Z-hexadecenyl)-sn-glycero-3-phosphocholine. Essential player in lysosomal homeostasis. Crucial for cell survival under conditions of nutrient limitation. May be involved in necrotic or autophagic cell death. The polypeptide is Protein spinster homolog 1 (Spns1) (Mus musculus (Mouse)).